Here is a 124-residue protein sequence, read N- to C-terminus: Fluoride-specific ion channel FluC (124 aa).

4 helical membrane-spanning segments follow: residues 3–23, 34–54, 68–88, and 100–120; these read VLLI…VSNL, IGTL…FIFI, LLLI…IETF, and ALNV…GVLI. Na(+) is bound by residues Gly75 and Thr78.

The protein belongs to the fluoride channel Fluc/FEX (TC 1.A.43) family.

The protein localises to the cell inner membrane. It catalyses the reaction fluoride(in) = fluoride(out). Na(+) is not transported, but it plays an essential structural role and its presence is essential for fluoride channel function. In terms of biological role, fluoride-specific ion channel. Important for reducing fluoride concentration in the cell, thus reducing its toxicity. This is Fluoride-specific ion channel FluC from Coxiella burnetii (strain Dugway 5J108-111).